The primary structure comprises 258 residues: Indole-3-glycerol phosphate synthase (258 aa).

This sequence belongs to the TrpC family.

It carries out the reaction 1-(2-carboxyphenylamino)-1-deoxy-D-ribulose 5-phosphate + H(+) = (1S,2R)-1-C-(indol-3-yl)glycerol 3-phosphate + CO2 + H2O. Its pathway is amino-acid biosynthesis; L-tryptophan biosynthesis; L-tryptophan from chorismate: step 4/5. The chain is Indole-3-glycerol phosphate synthase from Chlorobium phaeobacteroides (strain DSM 266 / SMG 266 / 2430).